We begin with the raw amino-acid sequence, 188 residues long: Josephin-2 (188 aa).

Residues 11 to 188 enclose the Josephin domain; it reads PPSVYHERQR…EEAGCWLNTS (178 aa). Catalysis depends on cysteine 24, which acts as the Nucleophile. The active-site Proton acceptor is the histidine 125.

The protein localises to the cytoplasm. Its subcellular location is the cytosol. It carries out the reaction Thiol-dependent hydrolysis of ester, thioester, amide, peptide and isopeptide bonds formed by the C-terminal Gly of ubiquitin (a 76-residue protein attached to proteins as an intracellular targeting signal).. Functionally, cleaves 'Lys-63'-linked poly-ubiquitin chains, and with lesser efficiency 'Lys-48'-linked poly-ubiquitin chains (in vitro). May act as a deubiquitinating enzyme. In Mus musculus (Mouse), this protein is Josephin-2 (Josd2).